Consider the following 313-residue polypeptide: Secretory carrier-associated membrane protein 4 (313 aa).

A disordered region spans residues Met-1–Asn-69. Over Met-1 to Gln-148 the chain is Cytoplasmic. Residues Met-85 to Ala-116 are a coiled coil. Helical transmembrane passes span Tyr-149–Val-169, Ile-181–Tyr-201, Phe-216–Ser-236, and Leu-255–Leu-275. The Cytoplasmic segment spans residues Glu-276–Phe-313.

Belongs to the SCAMP family.

The protein localises to the cell membrane. Its subcellular location is the cytoplasmic vesicle. The protein resides in the secretory vesicle membrane. Probably involved in membrane trafficking. This Oryza sativa subsp. japonica (Rice) protein is Secretory carrier-associated membrane protein 4 (SCAMP4).